We begin with the raw amino-acid sequence, 341 residues long: Homeobox protein mls-2 (341 aa).

2 disordered regions span residues methionine 1–asparagine 78 and serine 139–serine 209. Residues threonine 64–asparagine 78 show a composition bias toward polar residues. Residues lysine 153–aspartate 166 show a composition bias toward basic and acidic residues. A DNA-binding region (homeobox) is located at residues lysine 201–alanine 260.

The protein belongs to the HMX homeobox family. Expressed in a subset of head neurons, including AIM and ASK (at protein level).

It localises to the nucleus. Its function is as follows. Transcription factor that binds to the promoter of target genes. Regulates fate specification and/or differentiation of multiple cell types arising from the embryonic mesodermal (M) lineage and the ABp(l/r)paa precursors. In the postembryonic M lineage, regulates cleavage orientation, cell proliferation and cell fate specification. Regulates hlh-1 expression to specify coelomocyte fate in the mesodermal (M) lineage. In AWC neurons, initiates expression of ceh-36, leading to the expression of terminal differentiation genes. Regulates ventral cephalic sheath (CEPsh) glia differentiation and expression of transcription factor hlh-17 in CEPsh glia. Promotes terminal differentiation and morphogenesis of the epithelial duct and pore cells. In the duct cell, cooperates with the EGF-Ras-ERK pathway in turning on the terminal differentiation gene lin-48. The sequence is that of Homeobox protein mls-2 from Caenorhabditis elegans.